The chain runs to 137 residues: Gonadotropin subunit beta-2 (137 aa).

Positions 1–24 are cleaved as a signal peptide; sequence MLPFMLSSFLGASPSIWPLAPAEA. 6 disulfide bridges follow: Cys-30–Cys-76, Cys-44–Cys-91, Cys-47–Cys-129, Cys-55–Cys-107, Cys-59–Cys-109, and Cys-112–Cys-119. Asn-34 carries an N-linked (GlcNAc...) asparagine glycan.

The protein belongs to the glycoprotein hormones subunit beta family. Heterodimer of an alpha and a beta chain.

It is found in the secreted. In terms of biological role, involved in gametogenesis and steroidogenesis. The sequence is that of Gonadotropin subunit beta-2 (cgbb) from Acanthopagrus latus (Yellowfin seabream).